Reading from the N-terminus, the 875-residue chain is Neurotrypsin (875 aa).

The signal sequence occupies residues 1 to 20 (MTLARFALALLFGVLPEVVG). A glycan (N-linked (GlcNAc...) asparagine) is linked at Asn-26. The tract at residues 51-72 (QRHRRTRPPPPLPRFPRPPRAL) is disordered. The segment covering 58–71 (PPPPLPRFPRPPRA) has biased composition (pro residues). A Kringle domain is found at 93–165 (CPAGEPWVSV…GKVDWGYCDC (73 aa)). 20 disulfides stabilise this stretch: Cys-93–Cys-165, Cys-109–Cys-149, Cys-138–Cys-163, Cys-195–Cys-259, Cys-208–Cys-269, Cys-239–Cys-249, Cys-305–Cys-369, Cys-318–Cys-379, Cys-349–Cys-359, Cys-412–Cys-475, Cys-425–Cys-485, Cys-455–Cys-465, Cys-525–Cys-589, Cys-538–Cys-599, Cys-569–Cys-579, Cys-619–Cys-750, Cys-661–Cys-677, Cys-765–Cys-831, Cys-794–Cys-808, and Cys-821–Cys-850. SRCR domains are found at residues 170–271 (VRLR…MCSF), 280–381 (IRLV…SCTP), 387–487 (IRLA…ACYP), and 500–601 (VRLM…ICDY). Residues 619 to 630 (CGLRLLHRRQKR) are zymogen activation region. One can recognise a Peptidase S1 domain in the interval 631 to 874 (IIGGKNSLRG…FVPWIKSVTK (244 aa)). His-676 acts as the Charge relay system in catalysis. N-linked (GlcNAc...) asparagine glycosylation occurs at Asn-683. Asp-726 functions as the Charge relay system in the catalytic mechanism. Ser-825 functions as the Charge relay system in the catalytic mechanism.

This sequence belongs to the peptidase S1 family.

Its subcellular location is the secreted. Its function is as follows. Plays a role in neuronal plasticity and the proteolytic action may subserve structural reorganizations associated with learning and memory operations. The sequence is that of Neurotrypsin (PRSS12) from Saguinus labiatus (Red-chested mustached tamarin).